The primary structure comprises 407 residues: Peptidase T (407 aa).

Histidine 78 serves as a coordination point for Zn(2+). Aspartate 80 is an active-site residue. Aspartate 139 contacts Zn(2+). Glutamate 173 acts as the Proton acceptor in catalysis. Zn(2+) contacts are provided by glutamate 174, aspartate 196, and histidine 378.

It belongs to the peptidase M20B family. The cofactor is Zn(2+).

The protein localises to the cytoplasm. The enzyme catalyses Release of the N-terminal residue from a tripeptide.. Cleaves the N-terminal amino acid of tripeptides. In Shewanella pealeana (strain ATCC 700345 / ANG-SQ1), this protein is Peptidase T.